Here is a 207-residue protein sequence, read N- to C-terminus: NADH-ubiquinone oxidoreductase chain 6 (207 aa).

Helical transmembrane passes span methionine 1–glutamine 21, serine 28–leucine 48, phenylalanine 50–valine 70, tyrosine 88–aspartate 108, and phenylalanine 158–leucine 178.

This sequence belongs to the complex I subunit 6 family.

The protein localises to the mitochondrion membrane. The catalysed reaction is a ubiquinone + NADH + 5 H(+)(in) = a ubiquinol + NAD(+) + 4 H(+)(out). Functionally, core subunit of the mitochondrial membrane respiratory chain NADH dehydrogenase (Complex I) that is believed to belong to the minimal assembly required for catalysis. Complex I functions in the transfer of electrons from NADH to the respiratory chain. The immediate electron acceptor for the enzyme is believed to be ubiquinone. The protein is NADH-ubiquinone oxidoreductase chain 6 (ND6) of Prototheca wickerhamii.